A 246-amino-acid polypeptide reads, in one-letter code: Carbonic anhydrase (246 aa).

Positions 1–22 (MKTSLGKAALLALSMMPVTVFA) are cleaved as a signal peptide. In terms of domain architecture, Alpha-carbonic anhydrase spans 23 to 246 (SHWSYEGEGS…QPLNGRVVIE (224 aa)). Cys46 and Cys201 are disulfide-bonded. The active-site Proton acceptor is His84. Residues His111, His113, and His130 each coordinate Zn(2+). 197–198 (TT) lines the substrate pocket.

Belongs to the alpha-carbonic anhydrase family. Zn(2+) serves as cofactor.

The protein resides in the periplasm. It catalyses the reaction hydrogencarbonate + H(+) = CO2 + H2O. In terms of biological role, reversible hydration of carbon dioxide. This chain is Carbonic anhydrase (cah), found in Klebsiella pneumoniae.